The primary structure comprises 21 residues: Large ribosomal subunit protein uL10 (21 aa).

The protein belongs to the universal ribosomal protein uL10 family. As to quaternary structure, part of the ribosomal stalk of the 50S ribosomal subunit. The N-terminus interacts with L11 and the large rRNA to form the base of the stalk. The C-terminus forms an elongated spine to which L12 dimers bind in a sequential fashion forming a multimeric L10(L12)X complex.

In terms of biological role, forms part of the ribosomal stalk, playing a central role in the interaction of the ribosome with GTP-bound translation factors. The protein is Large ribosomal subunit protein uL10 (rplJ) of Proteus vulgaris.